The following is a 230-amino-acid chain: Uracil-DNA glycosylase (230 aa).

Aspartate 70 serves as the catalytic Proton acceptor.

The protein belongs to the uracil-DNA glycosylase (UDG) superfamily. UNG family.

It is found in the cytoplasm. It carries out the reaction Hydrolyzes single-stranded DNA or mismatched double-stranded DNA and polynucleotides, releasing free uracil.. In terms of biological role, excises uracil residues from the DNA which can arise as a result of misincorporation of dUMP residues by DNA polymerase or due to deamination of cytosine. This Pseudomonas putida (strain W619) protein is Uracil-DNA glycosylase.